The chain runs to 257 residues: Putative transcription factor R430 (257 aa).

Disordered regions lie at residues 1 to 35 and 58 to 77; these read MEKF…DNNS and SLKS…PNKS. A compositionally biased stretch (low complexity) spans 7-25; it reads TDNTTDNTTDNTTDNTTDN. Residues 26-35 are compositionally biased toward basic and acidic residues; it reads TTDKLTDNNS.

This sequence belongs to the nucleo-cytoplasmic large DNA viruses (NCLDVs) VLTF-3 family.

In terms of biological role, putative transcription factor. This Acanthamoeba polyphaga (Amoeba) protein is Putative transcription factor R430.